We begin with the raw amino-acid sequence, 459 residues long: 3-carboxy-cis,cis-muconate cycloisomerase (459 aa).

It belongs to the class-II fumarase/aspartase family. In terms of assembly, homotetramer.

The protein localises to the cytoplasm. The enzyme catalyses 2-(carboxymethyl)-5-oxo-2,5-dihydro-2-furoate = 3-carboxy-cis,cis-muconate + H(+). Its pathway is aromatic compound metabolism; beta-ketoadipate pathway; 5-oxo-4,5-dihydro-2-furylacetate from 3-carboxy-cis,cis-muconate: step 1/2. Catalyzes an anti cycloisomerization. In Pseudomonas aeruginosa (strain ATCC 15692 / DSM 22644 / CIP 104116 / JCM 14847 / LMG 12228 / 1C / PRS 101 / PAO1), this protein is 3-carboxy-cis,cis-muconate cycloisomerase (pcaB).